Here is a 182-residue protein sequence, read N- to C-terminus: Adenine phosphoribosyltransferase (182 aa).

This sequence belongs to the purine/pyrimidine phosphoribosyltransferase family. As to quaternary structure, homodimer.

The protein resides in the cytoplasm. It carries out the reaction AMP + diphosphate = 5-phospho-alpha-D-ribose 1-diphosphate + adenine. It participates in purine metabolism; AMP biosynthesis via salvage pathway; AMP from adenine: step 1/1. Its function is as follows. Catalyzes a salvage reaction resulting in the formation of AMP, that is energically less costly than de novo synthesis. The polypeptide is Adenine phosphoribosyltransferase (Campylobacter jejuni subsp. jejuni serotype O:2 (strain ATCC 700819 / NCTC 11168)).